Consider the following 662-residue polypeptide: uncharacterized protein (662 aa).

This is an uncharacterized protein from Ictalurid herpesvirus 1 (strain Auburn) (IcHV-1).